Consider the following 108-residue polypeptide: ATP-dependent Clp protease adapter protein ClpS (108 aa).

It belongs to the ClpS family. In terms of assembly, binds to the N-terminal domain of the chaperone ClpA.

In terms of biological role, involved in the modulation of the specificity of the ClpAP-mediated ATP-dependent protein degradation. This is ATP-dependent Clp protease adapter protein ClpS from Mycobacterium leprae (strain TN).